The primary structure comprises 343 residues: GTPase Obg (343 aa).

Residues 2–160 form the Obg domain; the sequence is EKFVDRVKIF…RWIILELKLI (159 aa). Residues 161-332 form the OBG-type G domain; it reads ADVGLVGFPN…LKEGLWKKYE (172 aa). GTP contacts are provided by residues 167 to 174, 192 to 196, 214 to 217, 284 to 287, and 313 to 315; these read GFPNAGKS, FTTLS, DIPG, NKID, and SAL. S174 and T194 together coordinate Mg(2+).

Belongs to the TRAFAC class OBG-HflX-like GTPase superfamily. OBG GTPase family. As to quaternary structure, monomer. It depends on Mg(2+) as a cofactor.

It is found in the cytoplasm. In terms of biological role, an essential GTPase which binds GTP, GDP and possibly (p)ppGpp with moderate affinity, with high nucleotide exchange rates and a fairly low GTP hydrolysis rate. Plays a role in control of the cell cycle, stress response, ribosome biogenesis and in those bacteria that undergo differentiation, in morphogenesis control. The chain is GTPase Obg from Aquifex aeolicus (strain VF5).